The primary structure comprises 504 residues: Maturase K (504 aa).

The protein belongs to the intron maturase 2 family. MatK subfamily.

It localises to the plastid. The protein localises to the chloroplast. In terms of biological role, usually encoded in the trnK tRNA gene intron. Probably assists in splicing its own and other chloroplast group II introns. The protein is Maturase K of Kokia drynarioides (Hawaiian tree cotton).